The following is a 573-amino-acid chain: Ascochitine biosynthesis cluster transcriptional regulator (573 aa).

It localises to the nucleus. Functionally, transcription factor that regulates the expression of the gene cluster that mediates the biosynthesis of the mycotoxin ascochitine, an o-quinone methide that plays a possible protective role against other microbial competitors in nature and is considered to be important for pathogenicity of legume-associated Didymella species. In Didymella fabae (Leaf and pod spot disease fungus), this protein is Ascochitine biosynthesis cluster transcriptional regulator.